A 431-amino-acid polypeptide reads, in one-letter code: L-cysteine:1D-myo-inositol 2-amino-2-deoxy-alpha-D-glucopyranoside ligase (431 aa).

Cys-44 provides a ligand contact to Zn(2+). L-cysteinyl-5'-AMP-binding positions include 44–47 (CGIT), Thr-59, and 82–84 (NVT). Positions 46–56 (ITPYDATHLGH) match the 'HIGH' region motif. Positions 187-192 (ERGGDP) match the 'ERGGDP' region motif. Trp-227 provides a ligand contact to L-cysteinyl-5'-AMP. Cys-231 contacts Zn(2+). 249-251 (GND) lines the L-cysteinyl-5'-AMP pocket. His-256 provides a ligand contact to Zn(2+). Ile-283 serves as a coordination point for L-cysteinyl-5'-AMP. The short motif at 289-293 (KMSKS) is the 'KMSKS' region element.

Belongs to the class-I aminoacyl-tRNA synthetase family. MshC subfamily. In terms of assembly, monomer. It depends on Zn(2+) as a cofactor.

It carries out the reaction 1D-myo-inositol 2-amino-2-deoxy-alpha-D-glucopyranoside + L-cysteine + ATP = 1D-myo-inositol 2-(L-cysteinylamino)-2-deoxy-alpha-D-glucopyranoside + AMP + diphosphate + H(+). Functionally, catalyzes the ATP-dependent condensation of GlcN-Ins and L-cysteine to form L-Cys-GlcN-Ins. This Stackebrandtia nassauensis (strain DSM 44728 / CIP 108903 / NRRL B-16338 / NBRC 102104 / LLR-40K-21) protein is L-cysteine:1D-myo-inositol 2-amino-2-deoxy-alpha-D-glucopyranoside ligase.